The following is a 112-amino-acid chain: UPF0342 protein SPT_0901 (112 aa).

This sequence belongs to the UPF0342 family.

The protein is UPF0342 protein SPT_0901 of Streptococcus pneumoniae (strain Taiwan19F-14).